We begin with the raw amino-acid sequence, 732 residues long: Serine/threonine-protein kinase CBK1 (732 aa).

Residues 111–240 are disordered; sequence SFDNHLNVDP…STEAANSDMT (130 aa). Residues 119–159 show a composition bias toward polar residues; the sequence is DPNNTERFTSMDSMNFQPPASTFTQLGNGSSTNLSEISSGQ. Residues 160–171 are compositionally biased toward low complexity; it reads NSLLSNHSVNNL. A compositionally biased stretch (polar residues) spans 172 to 183; it reads PTALTSDTSPPV. The segment covering 185–221 has biased composition (low complexity); sequence QHPQFQPQQQQQQQQPQQQQIFQQQQQQQQQQQQPQQ. Polar residues predominate over residues 222–240; it reads SRAVVNQSVSTEAANSDMT. Positions 281–310 form a coiled coil; that stretch reads HAIERNQRRLELENKIANEDIGSSEERKNR. The region spanning 335–647 is the Protein kinase domain; the sequence is FHTVKVIGKG…AEEIKQHPFF (313 aa). ATP is bound by residues 341-349 and K364; that span reads IGKGAFGEV. The active-site Proton acceptor is the D458. Positions 648-730 constitute an AGC-kinase C-terminal domain; that stretch reads RGVDWDSIRD…SRFDYLTRKN (83 aa).

The protein belongs to the protein kinase superfamily. STE Ser/Thr protein kinase family. COT1 subfamily. In terms of assembly, interacts with MOB2 and BCR1.

The protein resides in the bud neck. The protein localises to the cell tip. It catalyses the reaction L-seryl-[protein] + ATP = O-phospho-L-seryl-[protein] + ADP + H(+). The enzyme catalyses L-threonyl-[protein] + ATP = O-phospho-L-threonyl-[protein] + ADP + H(+). Its function is as follows. Serine/threonine-protein kinase required for wild-type hyphal growth and transcriptional regulation of cell-wall-associated genes. Involved in the biofilm formation through phosphorylation of the master regulator of biofilm formation BCR1. This is Serine/threonine-protein kinase CBK1 (CBK1) from Candida albicans (strain SC5314 / ATCC MYA-2876) (Yeast).